A 225-amino-acid polypeptide reads, in one-letter code: Single-pass membrane and coiled-coil domain-containing protein 3 (225 aa).

The stretch at 69-92 forms a coiled coil; it reads IIQAMTKIQKELQKIDEALKDQLE. A helical transmembrane segment spans residues 155–175; sequence IGTSLLGSIGVAVLSLGIDMI. Residues 182–209 are a coiled coil; sequence AVERTQLQAAIKSYEKHLEEFKAASAKY.

It is found in the membrane. The polypeptide is Single-pass membrane and coiled-coil domain-containing protein 3 (Smco3) (Mus musculus (Mouse)).